A 456-amino-acid polypeptide reads, in one-letter code: Bifunctional protein GlmU (456 aa).

The pyrophosphorylase stretch occupies residues 1–229; sequence MLNNAMSVVI…LSEVEGVNNR (229 aa). UDP-N-acetyl-alpha-D-glucosamine-binding positions include 11–14, lysine 25, glutamine 76, 81–82, 103–105, glycine 140, glutamate 154, asparagine 169, and asparagine 227; these read LAAG, GT, and YGD. Aspartate 105 serves as a coordination point for Mg(2+). Asparagine 227 serves as a coordination point for Mg(2+). Residues 230–250 form a linker region; the sequence is LQLSRLERVYQSEQAEKLLLA. The segment at 251 to 456 is N-acetyltransferase; sequence GVMLRDPARF…EGWRRPVKKK (206 aa). Residues arginine 333 and lysine 351 each contribute to the UDP-N-acetyl-alpha-D-glucosamine site. Histidine 363 acts as the Proton acceptor in catalysis. The UDP-N-acetyl-alpha-D-glucosamine site is built by tyrosine 366 and asparagine 377. Acetyl-CoA is bound by residues alanine 380, 386 to 387, serine 405, alanine 423, and arginine 440; that span reads NY.

This sequence in the N-terminal section; belongs to the N-acetylglucosamine-1-phosphate uridyltransferase family. It in the C-terminal section; belongs to the transferase hexapeptide repeat family. In terms of assembly, homotrimer. Mg(2+) is required as a cofactor.

The protein resides in the cytoplasm. It carries out the reaction alpha-D-glucosamine 1-phosphate + acetyl-CoA = N-acetyl-alpha-D-glucosamine 1-phosphate + CoA + H(+). The catalysed reaction is N-acetyl-alpha-D-glucosamine 1-phosphate + UTP + H(+) = UDP-N-acetyl-alpha-D-glucosamine + diphosphate. Its pathway is nucleotide-sugar biosynthesis; UDP-N-acetyl-alpha-D-glucosamine biosynthesis; N-acetyl-alpha-D-glucosamine 1-phosphate from alpha-D-glucosamine 6-phosphate (route II): step 2/2. It functions in the pathway nucleotide-sugar biosynthesis; UDP-N-acetyl-alpha-D-glucosamine biosynthesis; UDP-N-acetyl-alpha-D-glucosamine from N-acetyl-alpha-D-glucosamine 1-phosphate: step 1/1. It participates in bacterial outer membrane biogenesis; LPS lipid A biosynthesis. Catalyzes the last two sequential reactions in the de novo biosynthetic pathway for UDP-N-acetylglucosamine (UDP-GlcNAc). The C-terminal domain catalyzes the transfer of acetyl group from acetyl coenzyme A to glucosamine-1-phosphate (GlcN-1-P) to produce N-acetylglucosamine-1-phosphate (GlcNAc-1-P), which is converted into UDP-GlcNAc by the transfer of uridine 5-monophosphate (from uridine 5-triphosphate), a reaction catalyzed by the N-terminal domain. This Shigella sonnei (strain Ss046) protein is Bifunctional protein GlmU.